The chain runs to 269 residues: D-aminoacyl-tRNA deacylase (269 aa).

It belongs to the DtdA deacylase family. In terms of assembly, monomer. Requires Zn(2+) as cofactor.

It catalyses the reaction a D-aminoacyl-tRNA + H2O = a tRNA + a D-alpha-amino acid + H(+). The enzyme catalyses glycyl-tRNA(Ala) + H2O = tRNA(Ala) + glycine + H(+). In terms of biological role, D-aminoacyl-tRNA deacylase with broad substrate specificity. By recycling D-aminoacyl-tRNA to D-amino acids and free tRNA molecules, this enzyme counteracts the toxicity associated with the formation of D-aminoacyl-tRNA entities in vivo. The sequence is that of D-aminoacyl-tRNA deacylase from Caldivirga maquilingensis (strain ATCC 700844 / DSM 13496 / JCM 10307 / IC-167).